The primary structure comprises 329 residues: MSSKRVTWLSLTWVLVFLCLSVELEAQLQVGFYRTSCGLAEFIVKDEVRKGFIRDSGVAPGLVRMHFHDCFVRGCDGSVLIDSTPSNTAEKDSPANNPSLRGFEVIDSAKARLEAVCKGVVSCADIVAFAARDSVEITGGLGYDVPAGRRDGRISLASEASTNLPPPTFTVDQLTQFFSNKGLTQDEMVTLSGAHTIGRSHCSSFSNRLYNFNGTSGQDPTLDPQYAASLKTQCPQGSTNTNLVVPMNPSSPSITDVGYYVDVLRNRGLFTSDQTLLTDTTTATQVRQNAGNPFLWKNKFASAMVKMGQLGVLIGEAGQIRANCRVINS.

A signal peptide spans 1 to 26 (MSSKRVTWLSLTWVLVFLCLSVELEA). Gln27 bears the Pyrrolidone carboxylic acid mark. 4 disulfide bridges follow: Cys37/Cys117, Cys70/Cys75, Cys123/Cys324, and Cys202/Cys234. His68 (proton acceptor) is an active-site residue. 5 residues coordinate Ca(2+): Asp69, Val72, Gly74, Asp76, and Ser78. Substrate is bound at residue Pro165. His195 provides a ligand contact to heme b. Residue Thr196 coordinates Ca(2+). A glycan (N-linked (GlcNAc...) asparagine) is linked at Asn213. Ca(2+) contacts are provided by Ser251 and Asp256.

It belongs to the peroxidase family. Classical plant (class III) peroxidase subfamily. Heme b is required as a cofactor. The cofactor is Ca(2+).

The protein resides in the secreted. It catalyses the reaction 2 a phenolic donor + H2O2 = 2 a phenolic radical donor + 2 H2O. Its function is as follows. Removal of H(2)O(2), oxidation of toxic reductants, biosynthesis and degradation of lignin, suberization, auxin catabolism, response to environmental stresses such as wounding, pathogen attack and oxidative stress. These functions might be dependent on each isozyme/isoform in each plant tissue. The chain is Peroxidase 5 from Vitis vinifera (Grape).